Reading from the N-terminus, the 448-residue chain is Phosphoglucosamine mutase (448 aa).

Residue Ser100 is the Phosphoserine intermediate of the active site. Mg(2+) is bound by residues Ser100, Asp240, Asp242, and Asp244. At Ser100 the chain carries Phosphoserine.

This sequence belongs to the phosphohexose mutase family. It depends on Mg(2+) as a cofactor. Activated by phosphorylation.

The enzyme catalyses alpha-D-glucosamine 1-phosphate = D-glucosamine 6-phosphate. In terms of biological role, catalyzes the conversion of glucosamine-6-phosphate to glucosamine-1-phosphate. The chain is Phosphoglucosamine mutase from Bacillus cereus (strain ATCC 10987 / NRS 248).